The chain runs to 485 residues: N-succinylglutamate 5-semialdehyde dehydrogenase (485 aa).

220–225 is an NAD(+) binding site; that stretch reads GSANTG. Active-site residues include Glu-243 and Cys-278.

The protein belongs to the aldehyde dehydrogenase family. AstD subfamily.

It catalyses the reaction N-succinyl-L-glutamate 5-semialdehyde + NAD(+) + H2O = N-succinyl-L-glutamate + NADH + 2 H(+). Its pathway is amino-acid degradation; L-arginine degradation via AST pathway; L-glutamate and succinate from L-arginine: step 4/5. Its function is as follows. Catalyzes the NAD-dependent reduction of succinylglutamate semialdehyde into succinylglutamate. The chain is N-succinylglutamate 5-semialdehyde dehydrogenase from Vibrio atlanticus (strain LGP32) (Vibrio splendidus (strain Mel32)).